A 106-amino-acid polypeptide reads, in one-letter code: Large ribosomal subunit protein eL42 (106 aa).

Residues Cys12, Cys17, Cys74, and Cys77 each coordinate Zn(2+).

The protein belongs to the eukaryotic ribosomal protein eL42 family. In terms of assembly, component of the large ribosomal subunit. Mature ribosomes consist of a small (40S) and a large (60S) subunit. The 40S subunit contains about 32 different proteins and 1 molecule of RNA (18S). The 60S subunit contains 45 different proteins and 3 molecules of RNA (25S, 5.8S and 5S). Requires Zn(2+) as cofactor.

It is found in the cytoplasm. Functionally, component of the ribosome, a large ribonucleoprotein complex responsible for the synthesis of proteins in the cell. The small ribosomal subunit (SSU) binds messenger RNAs (mRNAs) and translates the encoded message by selecting cognate aminoacyl-transfer RNA (tRNA) molecules. The large subunit (LSU) contains the ribosomal catalytic site termed the peptidyl transferase center (PTC), which catalyzes the formation of peptide bonds, thereby polymerizing the amino acids delivered by tRNAs into a polypeptide chain. The nascent polypeptides leave the ribosome through a tunnel in the LSU and interact with protein factors that function in enzymatic processing, targeting, and the membrane insertion of nascent chains at the exit of the ribosomal tunnel. The protein is Large ribosomal subunit protein eL42 (RPL44) of Candida albicans (strain SC5314 / ATCC MYA-2876) (Yeast).